The chain runs to 350 residues: C5a anaphylatoxin chemotactic receptor 1 (350 aa).

The Extracellular portion of the chain corresponds to 1 to 37; sequence MDSFDYTTPDYGHYDDKDTLDLNTPVDKTSNTLRVPD. The interval 10–18 is required for CHIPS binding; sequence DYGHYDDKD. 2 positions are modified to sulfotyrosine: Tyr-11 and Tyr-14. The involved in C5a binding stretch occupies residues 21–30; it reads DLNTPVDKTS. A helical transmembrane segment spans residues 38 to 64; it reads ILALVIFAVVFLVGVLGNALVVWVTAF. The Cytoplasmic portion of the chain corresponds to 65–69; it reads EAKRT. A helical membrane pass occupies residues 70 to 93; it reads INAIWFLNLAVADFLSCLALPILF. Over 94–110 the chain is Extracellular; it reads TSIVQHHHWPFGGAACS. A disulfide bridge connects residues Cys-109 and Cys-188. The helical transmembrane segment at 111–132 threads the bilayer; the sequence is ILPSLILLNMYASILLLATISA. Over 133–153 the chain is Cytoplasmic; sequence DRFLLVFKPIWCQNFRGAGLA. A helical membrane pass occupies residues 154 to 174; sequence WIACAVAWGLALLLTIPSFLY. The Extracellular segment spans residues 175 to 200; sequence RVVREEYFPPKVLCGVDYSHDKRRER. The helical transmembrane segment at 201–226 threads the bilayer; sequence AVAIVRLVLGFLWPLLTLMICYTFIL. At 227–242 the chain is on the cytoplasmic side; that stretch reads LRTWSRRATRSTKTLK. The chain crosses the membrane as a helical span at residues 243-265; that stretch reads VVVAVVASFFIFWLPYQVTGIMM. Residues 266–282 lie on the Extracellular side of the membrane; the sequence is SFLEPSSPTFRLLKKLD. The helical transmembrane segment at 283 to 303 threads the bilayer; the sequence is SLCVSFAYINCCINPIIYVVA. Residues 304–350 lie on the Cytoplasmic side of the membrane; that stretch reads GQGFQGRLQKSLPSLLRNVLTEESVVRESKSFARSTVDTMADKTQAV. Phosphoserine is present on residues Ser-314, Ser-317, Ser-327, Ser-332, Ser-334, and Ser-338.

Belongs to the G-protein coupled receptor 1 family. As to quaternary structure, homodimer. May also form higher-order oligomers. Interacts (when phosphorylated) with ARRB1 and ARRB2; the interaction is associated with internalization of C5aR. Interacts (via N-terminal domain) with S.aureus chemotaxis inhibitory protein (CHIPS); the interaction blocks the receptor and may thus inhibit the immune response. Post-translationally, sulfation plays a critical role in the association of C5aR with C5a, but no significant role in the ability of the receptor to transduce a signal and mobilize calcium in response to a small peptide agonist. Sulfation at Tyr-14 is important for CHIPS binding. Phosphorylated on serine residues in response to C5a binding, resulting in internalization of the receptor and short-term desensitization to C5a.

The protein resides in the cell membrane. It is found in the cytoplasmic vesicle. Its function is as follows. Receptor for the chemotactic and inflammatory peptide anaphylatoxin C5a. The ligand interacts with at least two sites on the receptor: a high-affinity site on the extracellular N-terminus, and a second site in the transmembrane region which activates downstream signaling events. Receptor activation stimulates chemotaxis, granule enzyme release, intracellular calcium release and superoxide anion production. This is C5a anaphylatoxin chemotactic receptor 1 (C5AR1) from Pan troglodytes (Chimpanzee).